We begin with the raw amino-acid sequence, 563 residues long: Adenine deaminase (563 aa).

Belongs to the metallo-dependent hydrolases superfamily. Adenine deaminase family. Mn(2+) serves as cofactor.

The enzyme catalyses adenine + H2O + H(+) = hypoxanthine + NH4(+). The chain is Adenine deaminase from Brucella anthropi (strain ATCC 49188 / DSM 6882 / CCUG 24695 / JCM 21032 / LMG 3331 / NBRC 15819 / NCTC 12168 / Alc 37) (Ochrobactrum anthropi).